The sequence spans 508 residues: Asparagine--tRNA ligase (508 aa).

It belongs to the class-II aminoacyl-tRNA synthetase family. As to quaternary structure, homodimer.

It is found in the cytoplasm. The catalysed reaction is tRNA(Asn) + L-asparagine + ATP = L-asparaginyl-tRNA(Asn) + AMP + diphosphate + H(+). This chain is Asparagine--tRNA ligase, found in Streptococcus suis (strain 05ZYH33).